Here is a 491-residue protein sequence, read N- to C-terminus: NADH-ubiquinone oxidoreductase chain 4 (491 aa).

A run of 14 helical transmembrane segments spans residues 2–22 (IFHKNWLGLIFLLLFLGIINV), 37–57 (ALEWSLATLTATLILWAAFDM), 89–109 (ISLFFLILTALLTPICILISW), 114–134 (FLLKEFLLCLLFLEVLLMGVF), 139–159 (LLLFYILFEGILIPMFLLIGV), 169–189 (ASYYFFFYTFVGSVFMLLGIF), 215–235 (WIFAGFFLSLAVKIPQVPFHI), 245–265 (PVSGSVILAGILLKLGGYGFL), 271–291 (ILPAATEYFAPFVIMLSVIAI), 308–328 (IAYSSVAHMGLVTLGLFTHTI), 332–352 (VAAVFMMLAHGLVSSALFIAV), 372–392 (FSMPIFVSVFLVLTLTNMAIP), 412–432 (IVIGVLAATGMVWSAAYSLYL), and 457–477 (IAISPLVILIFILGVLPSLII).

This sequence belongs to the complex I subunit 4 family.

The protein localises to the mitochondrion membrane. The enzyme catalyses a ubiquinone + NADH + 5 H(+)(in) = a ubiquinol + NAD(+) + 4 H(+)(out). Core subunit of the mitochondrial membrane respiratory chain NADH dehydrogenase (Complex I) that is believed to belong to the minimal assembly required for catalysis. Complex I functions in the transfer of electrons from NADH to the respiratory chain. The immediate electron acceptor for the enzyme is believed to be ubiquinone. The polypeptide is NADH-ubiquinone oxidoreductase chain 4 (ND4) (Metridium senile (Brown sea anemone)).